Consider the following 784-residue polypeptide: E3 UFM1-protein ligase 1 homolog (784 aa).

Residues 401 to 481 (QKGNSSAQDL…GGGGGGNKKT (81 aa)) form a disordered region.

The protein belongs to the UFL1 family.

Functionally, E3 UFM1-protein ligase that mediates ufmylation of target proteins. In Drosophila ananassae (Fruit fly), this protein is E3 UFM1-protein ligase 1 homolog.